Here is a 691-residue protein sequence, read N- to C-terminus: DNA ligase (691 aa).

NAD(+) contacts are provided by residues Asp53–Asp57, Ser102–Leu103, and Glu135. Lys137 serves as the catalytic N6-AMP-lysine intermediate. Residues Arg158, Glu195, Lys310, and Lys334 each coordinate NAD(+). Zn(2+)-binding residues include Cys428, Cys431, Cys446, and Cys452. The BRCT domain occupies Ser613–Glu691.

It belongs to the NAD-dependent DNA ligase family. LigA subfamily. Requires Mg(2+) as cofactor. It depends on Mn(2+) as a cofactor.

It carries out the reaction NAD(+) + (deoxyribonucleotide)n-3'-hydroxyl + 5'-phospho-(deoxyribonucleotide)m = (deoxyribonucleotide)n+m + AMP + beta-nicotinamide D-nucleotide.. Its function is as follows. DNA ligase that catalyzes the formation of phosphodiester linkages between 5'-phosphoryl and 3'-hydroxyl groups in double-stranded DNA using NAD as a coenzyme and as the energy source for the reaction. It is essential for DNA replication and repair of damaged DNA. The polypeptide is DNA ligase (Psychrobacter cryohalolentis (strain ATCC BAA-1226 / DSM 17306 / VKM B-2378 / K5)).